The primary structure comprises 236 residues: SPbeta prophage-derived uncharacterized lipoprotein YokB (236 aa).

The N-terminal stretch at 1–19 (MNIRFSMLVCVSFIFFTGG) is a signal peptide. A lipid anchor (N-palmitoyl cysteine) is attached at cysteine 20. Cysteine 20 carries the S-diacylglycerol cysteine lipid modification. Disordered stretches follow at residues 23–59 (SSAN…TPNM) and 204–236 (VKKV…KDNK). The span at 31 to 53 (SKNKNESKEESSEEGVKENDNKL) shows a compositional bias: basic and acidic residues.

It is found in the cell membrane. The polypeptide is SPbeta prophage-derived uncharacterized lipoprotein YokB (yokB) (Bacillus subtilis (strain 168)).